The primary structure comprises 302 residues: Probable alpha-L-glutamate ligase (302 aa).

Positions 104-287 constitute an ATP-grasp domain; the sequence is LQLLSRKGLG…IAGQIIEYIE (184 aa). Residues Lys141, 178-179, Asp187, and 211-213 each bind ATP; these read EY and RSN. Mg(2+)-binding residues include Asp248, Glu260, and Asn262. Residues Asp248, Glu260, and Asn262 each coordinate Mn(2+).

The protein belongs to the RimK family. The cofactor is Mg(2+). It depends on Mn(2+) as a cofactor.

The protein is Probable alpha-L-glutamate ligase of Chromohalobacter salexigens (strain ATCC BAA-138 / DSM 3043 / CIP 106854 / NCIMB 13768 / 1H11).